The following is a 478-amino-acid chain: Nuclear distribution protein PAC1 (478 aa).

One can recognise a LisH domain in the interval 9–41 (QAEELHKAMIAYLLSANLPKSAAALREELADSV). Residues 60–87 (TSVVRLQKKIMDLESRNNALQSELDSAT) are a coiled coil. 8 WD repeats span residues 113–154 (SHRE…RTIK), 156–196 (HTKA…KNIR), 200–247 (GHDH…CVKT), 250–289 (GHVD…TKST), 292–352 (GHEH…IKTL), 354–393 (GHDN…KCVR), 398–439 (AHGH…GASA), and 440–477 (INGV…RVFA).

The protein belongs to the WD repeat LIS1/nudF family. In terms of assembly, self-associates. Interacts with NDL1 and dynein.

It is found in the cytoplasm. The protein localises to the cytoskeleton. The protein resides in the spindle pole. In terms of biological role, positively regulates the activity of the minus-end directed microtubule motor protein dynein. May enhance dynein-mediated microtubule sliding by targeting dynein to the microtubule plus end. Required for nuclear migration during vegetative growth as well as development. Required for retrograde early endosome (EE) transport from the hyphal tip. Required for localization of dynein to the mitotic spindle poles. Recruits additional proteins to the dynein complex at SPBs. The protein is Nuclear distribution protein PAC1 of Paracoccidioides brasiliensis (strain Pb03).